A 432-amino-acid chain; its full sequence is Enolase (432 aa).

Gln168 provides a ligand contact to (2R)-2-phosphoglycerate. The active-site Proton donor is Glu210. Mg(2+)-binding residues include Asp247, Glu288, and Asp315. Positions 340, 369, 370, and 391 each coordinate (2R)-2-phosphoglycerate. Lys340 acts as the Proton acceptor in catalysis.

It belongs to the enolase family. Requires Mg(2+) as cofactor.

Its subcellular location is the cytoplasm. It is found in the secreted. It localises to the cell surface. The enzyme catalyses (2R)-2-phosphoglycerate = phosphoenolpyruvate + H2O. The protein operates within carbohydrate degradation; glycolysis; pyruvate from D-glyceraldehyde 3-phosphate: step 4/5. In terms of biological role, catalyzes the reversible conversion of 2-phosphoglycerate (2-PG) into phosphoenolpyruvate (PEP). It is essential for the degradation of carbohydrates via glycolysis. In Microcystis aeruginosa (strain NIES-843 / IAM M-2473), this protein is Enolase.